Consider the following 429-residue polypeptide: Enolase (429 aa).

Q165 is a binding site for (2R)-2-phosphoglycerate. The active-site Proton donor is the E207. 3 residues coordinate Mg(2+): D244, E287, and D314. (2R)-2-phosphoglycerate is bound by residues K339, R368, S369, and K390. K339 acts as the Proton acceptor in catalysis.

This sequence belongs to the enolase family. Mg(2+) serves as cofactor.

It localises to the cytoplasm. It is found in the secreted. Its subcellular location is the cell surface. The enzyme catalyses (2R)-2-phosphoglycerate = phosphoenolpyruvate + H2O. The protein operates within carbohydrate degradation; glycolysis; pyruvate from D-glyceraldehyde 3-phosphate: step 4/5. In terms of biological role, catalyzes the reversible conversion of 2-phosphoglycerate (2-PG) into phosphoenolpyruvate (PEP). It is essential for the degradation of carbohydrates via glycolysis. This Roseiflexus sp. (strain RS-1) protein is Enolase.